The chain runs to 157 residues: Small ribosomal subunit protein uS7 (157 aa).

It belongs to the universal ribosomal protein uS7 family. In terms of assembly, part of the 30S ribosomal subunit. Contacts proteins S9 and S11.

Its function is as follows. One of the primary rRNA binding proteins, it binds directly to 16S rRNA where it nucleates assembly of the head domain of the 30S subunit. Is located at the subunit interface close to the decoding center, probably blocks exit of the E-site tRNA. The polypeptide is Small ribosomal subunit protein uS7 (Chloroflexus aggregans (strain MD-66 / DSM 9485)).